A 250-amino-acid polypeptide reads, in one-letter code: NAD(P)H-quinone oxidoreductase subunit K (250 aa).

Residues C60, C61, C125, and C156 each contribute to the [4Fe-4S] cluster site. The disordered stretch occupies residues 230–250 (ELNTPEIDVSPASQSSSTYES). Residues 240 to 250 (PASQSSSTYES) show a composition bias toward polar residues.

This sequence belongs to the complex I 20 kDa subunit family. NDH-1 can be composed of about 15 different subunits; different subcomplexes with different compositions have been identified which probably have different functions. The cofactor is [4Fe-4S] cluster.

Its subcellular location is the cellular thylakoid membrane. The catalysed reaction is a plastoquinone + NADH + (n+1) H(+)(in) = a plastoquinol + NAD(+) + n H(+)(out). The enzyme catalyses a plastoquinone + NADPH + (n+1) H(+)(in) = a plastoquinol + NADP(+) + n H(+)(out). NDH-1 shuttles electrons from an unknown electron donor, via FMN and iron-sulfur (Fe-S) centers, to quinones in the respiratory and/or the photosynthetic chain. The immediate electron acceptor for the enzyme in this species is believed to be plastoquinone. Couples the redox reaction to proton translocation, and thus conserves the redox energy in a proton gradient. Cyanobacterial NDH-1 also plays a role in inorganic carbon-concentration. In Prochlorococcus marinus (strain MIT 9313), this protein is NAD(P)H-quinone oxidoreductase subunit K.